Here is a 463-residue protein sequence, read N- to C-terminus: MAGLSRILLSCTLACLLAGQAAQASVDDPTRAGGDNRVRALRADQARRDVLLTACRDDPGHRRGEPDCVNAERAQALQQWQAAAMTSVDAAFSDLAGALRNAAPRRMEAAIVRLTRQLQPLVYSMMTLLVLLTGYALLARRDRPFEWHIRHALLVAVVTSLALSPDRYLSTVVAGVQDVAGWLSGPWTAPDGAAGRGGLAQLDQFAAQAQAWVAQLAGQAANDANPGSAVNWLLCAMIVAASAGGWLCLAASLLIVPGLIVTLLLSLGPLFLVLLLFPALQRWTNAWLGALVRALVFMALGTPAVGLLSDVLAGALPAGLPQRFATDPLRSTMLAATLCATATLMLLTLVPLASSVNAGLRRRLWPNAAHPGLAQAHRQAAARQYAPRPAAAAAAAGPHQAGTYAASATPAPAPARPAPSFPAHAYRQYALGGARRPPPRVRRDDRPAPAPDRRVLPRKPNLP.

The N-terminal stretch at 1–24 (MAGLSRILLSCTLACLLAGQAAQA) is a signal peptide. A run of 5 helical transmembrane segments spans residues 118–138 (LQPL…YALL), 232–252 (WLLC…LAAS), 253–273 (LLIV…LFLV), 294–314 (ALVF…VLAG), and 333–353 (MLAA…VPLA). Residues 376–410 (AHRQAAARQYAPRPAAAAAAAGPHQAGTYAASATP) are compositionally biased toward low complexity. The tract at residues 376–463 (AHRQAAARQY…RVLPRKPNLP (88 aa)) is disordered. Pro residues predominate over residues 411-420 (APAPARPAPS). Basic and acidic residues predominate over residues 441–455 (VRRDDRPAPAPDRRV).

The protein resides in the cell membrane. In terms of biological role, component of the type IV secretion system ptl required for secretion of assembled pertussis toxin (PTX) through the outer membrane. In Bordetella pertussis (strain Tohama I / ATCC BAA-589 / NCTC 13251), this protein is Type IV secretion system protein PtlD (ptlD).